Here is a 187-residue protein sequence, read N- to C-terminus: PsbQ-like protein 3, chloroplastic (187 aa).

Residues 1 to 32 constitute a chloroplast transit peptide; it reads MAISKPPPLHFTFFHNQDSSIDTSDSNLALSI. A thylakoid-targeting transit peptide spans 33–60; that stretch reads DTSRRRRDVLLTISGTLIPQLFFFDRKR.

It belongs to the PsbQ family. Subunit of the lumenal protuberance of the NDH complex.

It is found in the plastid. Its subcellular location is the chloroplast thylakoid membrane. Functionally, required for both formation and activity of the chloroplast NAD(P)H dehydrogenase (NDH) complex. The protein is PsbQ-like protein 3, chloroplastic (PQL3) of Arabidopsis thaliana (Mouse-ear cress).